We begin with the raw amino-acid sequence, 215 residues long: Ras-related protein Rab-5A (215 aa).

Positions 29, 30, 32, 33, 34, 35, 46, 47, 52, and 78 each coordinate GTP. S34 is a binding site for Mg(2+). Short sequence motifs (switch) lie at residues Q44–A56 and A77–A93. Residue T52 participates in Mg(2+) binding. Phosphoserine is present on S84. GTP is bound by residues N133, K134, D136, A164, and K165. The segment at L181–N215 is disordered. The span at E203–N215 shows a compositional bias: polar residues. 2 S-geranylgeranyl cysteine lipidation sites follow: C212 and C213.

The protein belongs to the small GTPase superfamily. Rab family. In terms of assembly, interacts with GDI1; this promotes dissociation from membranes; phosphorylation at Ser-84 disrupts this interaction. Interacts with GDI2; phosphorylation at Ser-84 disrupts the interaction. Binds EEA1. Interacts with ALS2CL, SUN2, ZFYVE20 and RUFY1. Interacts with RIN1 and GAPVD1, which regulate its pathway, probably by acting as a GEF. Interacts with SGSM1 and SGSM3. Interacts with PIK3CB. Interacts with RABEP1 and RINL. Interacts with OCRL and INPP5F. May be a component of a complex composed of RAB5A, DYN2 and PIK3C3. Does not interact with the BLOC-3 complex (heterodimer of HPS1 and HPS4). Interacts with CLN5. Interacts with APPL2. Interacts with F8A1/F8A2/F8A3. Found in a complex with F8A1/F8A2/F8A3, HTT and RAB5A; mediates the recruitment of HTT by RAB5A onto early endosomes. Interacts with ATP9A. Interacts with PPP1R21; mediates the recruitment of FERRY complex by RAB5A onto early endosomes. Mg(2+) is required as a cofactor. Phosphorylation of Ser-84 in the switch II region by LRRK2 prevents the association of RAB regulatory proteins, including RAB GDP dissociation inhibitors GDI1 and GDI2.

The protein resides in the cell membrane. It is found in the early endosome membrane. It localises to the melanosome. Its subcellular location is the cytoplasmic vesicle. The protein localises to the cell projection. The protein resides in the ruffle. It is found in the cytoplasm. It localises to the cytosol. Its subcellular location is the membrane. The protein localises to the phagosome membrane. The protein resides in the endosome membrane. It catalyses the reaction GTP + H2O = GDP + phosphate + H(+). With respect to regulation, regulated by guanine nucleotide exchange factors (GEFs) including RINL, which promote the exchange of bound GDP for free GTP. Regulated by GTPase activating proteins (GAPs) which increase the GTP hydrolysis activity. Inhibited by GDP dissociation inhibitors (GDIs). In terms of biological role, the small GTPases Rab are key regulators of intracellular membrane trafficking, from the formation of transport vesicles to their fusion with membranes. Rabs cycle between an inactive GDP-bound form and an active GTP-bound form that is able to recruit to membranes different sets of downstream effectors directly responsible for vesicle formation, movement, tethering and fusion. RAB5A is required for the fusion of plasma membranes and early endosomes. Contributes to the regulation of filopodia extension. Required for the exosomal release of SDCBP, CD63, PDCD6IP and syndecan. Regulates maturation of apoptotic cell-containing phagosomes, probably downstream of DYN2 and PIK3C3. In Canis lupus familiaris (Dog), this protein is Ras-related protein Rab-5A (RAB5A).